The sequence spans 576 residues: Putative pentatricopeptide repeat-containing protein At5g47460 (576 aa).

PPR repeat units lie at residues 20-53 (SSNSWSTIVPALARFGSIGVLRAAVELINDGEKP), 54-88 (DASPLVHLLRVSGNYGYVSLCRQLHGYVTKHGFVS), 89-119 (NTRLSNSLMRFYKTSDSLEDAHKVFDEMPDP), 120-154 (DVISWNSLVSGYVQSGRFQEGICLFLELHRSDVFP), 155-189 (NEFSFTAALAACARLHLSPLGACIHSKLVKLGLEK), 191-225 (NVVVGNCLIDMYGKCGFMDDAVLVFQHMEEKDTVS), 226-252 (WNAIVASCSRNGKLELGLWFFHQMPNP), 253-287 (DTVTYNELIDAFVKSGDFNNAFQVLSDMPNPNSSS), 288-318 (WNTILTGYVNSEKSGEATEFFTKMHSSGVRF), 319-353 (DEYSLSIVLAAVAALAVVPWGSLIHACAHKLGLDS), 354-384 (RVVVASALIDMYSKCGMLKHAELMFWTMPRK), 385-419 (NLIVWNEMISGYARNGDSIEAIKLFNQLKQERFLK), 421-452 (DRFTFLNLLAVCSHCEVPMEVMLGYFEMMINE), and 458-488 (SVEHCCSLIRAMGQRGEVWQAKQVIQEFGFG). Positions 493–570 (AWRALLGACS…EVGSSWIDSR (78 aa)) are type E motif.

The protein belongs to the PPR family. PCMP-E subfamily.

The polypeptide is Putative pentatricopeptide repeat-containing protein At5g47460 (PCMP-E103) (Arabidopsis thaliana (Mouse-ear cress)).